We begin with the raw amino-acid sequence, 1290 residues long: Alpha-factor-transporting ATPase (1290 aa).

The Cytoplasmic portion of the chain corresponds to 1 to 25 (MNFLSFKTTKHYHIFRYVNIRNDYR). A helical transmembrane segment spans residues 26 to 46 (LLMIMIIGTVATGLVPAITSI). An ABC transmembrane type-1 1 domain is found at 27–319 (LMIMIIGTVA…TLHQIVVLQK (293 aa)). The Extracellular segment spans residues 47 to 75 (LTGRVFDLLSVFVANGSHQGLYSQLVQRS). N-linked (GlcNAc...) asparagine glycosylation is present at N61. Residues 76 to 96 (MAVMALGAASVPVMWLSLTSW) form a helical membrane-spanning segment. Residues 97–150 (MHIGERQGFRIRSQILEAYLEEKPMEWYDNNEKLLGDFTQINRCVEELRSSSAE) lie on the Cytoplasmic side of the membrane. A helical transmembrane segment spans residues 151-171 (ASAITFQNLVAICALLGTSFY). The Extracellular segment spans residues 172-173 (YS). The helical transmembrane segment at 174–194 (WSLTLIILCSSPIITFFAVVF) threads the bilayer. At 195 to 262 (SRMIHVYSEK…SCFFVAANAG (68 aa)) the chain is on the cytoplasmic side. Residues 263-283 (ILRFLTLTMFVQGFWFGSAMI) traverse the membrane as a helical segment. At 284 to 296 (KKGKLNINDVITC) the chain is on the extracellular side. A helical membrane pass occupies residues 297–317 (FHSCIMLGSTLNNTLHQIVVL). Over 318–715 (QKGGVAMEKI…RMIKSIRYKK (398 aa)) the chain is Cytoplasmic. Residues 357–603 (LTFANVSFSY…PTTTFSTWYH (247 aa)) form the ABC transporter 1 domain. 392-399 (GKSGSGKS) is an ATP binding site. A helical transmembrane segment spans residues 716 to 736 (ILILGLLCSLIAGATNPVFSY). The ABC transmembrane type-1 2 domain occupies 717-1007 (LILGLLCSLI…LVSQIPDISR (291 aa)). The Extracellular portion of the chain corresponds to 737–763 (TFSFLLEGIVPSTDGKTGSSHYLAKWS). Residues 764 to 784 (LLVLGVAAADGIFNFAKGFLL) form a helical membrane-spanning segment. Residues 785–838 (DCCSEYWVMDLRNEVMEKLTRKNMDWFSGENNKASEISALVLNDLRDLRSLVSE) are Cytoplasmic-facing. Residues 839–859 (FLSAMTSFVTVSTIGLIWALV) form a helical membrane-spanning segment. The Extracellular segment spans residues 860–865 (SGWKLS). A helical membrane pass occupies residues 866–886 (LVCISMFPLIIIFSAIYGGIL). The Cytoplasmic segment spans residues 887–945 (QKCETDYKTSVAQLENCLYQIVTNIKTIKCLQAEFHFQLTYHDLKIKMQQIASKRAIAT). The helical transmembrane segment at 946–966 (GFGISMTNMIVMCIQAIIYYY) threads the bilayer. Over 967–981 (GLKLVMIHEYTSKEM) the chain is Extracellular. Residues 982 to 1002 (FTTFTLLLFTIMSCTSLVSQI) form a helical membrane-spanning segment. Over 1003 to 1290 (PDISRGQRAA…LFQIVSNQSS (288 aa)) the chain is Cytoplasmic. A Glycyl lysine isopeptide (Lys-Gly) (interchain with G-Cter in ubiquitin) cross-link involves residue K1022. The ABC transporter 2 domain maps to 1052 to 1287 (VSIQNLTFAY…RGELFQIVSN (236 aa)). Residue 1087-1094 (GESGTGKS) coordinates ATP.

The protein belongs to the ABC transporter superfamily. Alpha-factor sex pheromone exporter (TC 3.A.1.206) family. Degraded via the ubiquitin system.

Its subcellular location is the membrane. The enzyme catalyses an [alpha-factor](in) + ATP + H2O = an [alpha-factor](out) + ADP + phosphate + H(+). Functionally, STE6 is required in yeast MATA cells for production of A-factor pheromone. STE6 is involved in the transport of the farnesyl-derivation of the A-factor pheromone. This Saccharomyces cerevisiae (strain ATCC 204508 / S288c) (Baker's yeast) protein is Alpha-factor-transporting ATPase (STE6).